A 211-amino-acid chain; its full sequence is Thiamine-phosphate synthase (211 aa).

4-amino-2-methyl-5-(diphosphooxymethyl)pyrimidine is bound by residues 37–41 (QLRIK) and Asn-69. Residues Asp-70 and Asp-89 each contribute to the Mg(2+) site. Ser-108 contacts 4-amino-2-methyl-5-(diphosphooxymethyl)pyrimidine. 134 to 136 (TQT) serves as a coordination point for 2-[(2R,5Z)-2-carboxy-4-methylthiazol-5(2H)-ylidene]ethyl phosphate. Lys-137 contacts 4-amino-2-methyl-5-(diphosphooxymethyl)pyrimidine. 2-[(2R,5Z)-2-carboxy-4-methylthiazol-5(2H)-ylidene]ethyl phosphate is bound by residues Gly-166 and 186 to 187 (VS).

Belongs to the thiamine-phosphate synthase family. The cofactor is Mg(2+).

The enzyme catalyses 2-[(2R,5Z)-2-carboxy-4-methylthiazol-5(2H)-ylidene]ethyl phosphate + 4-amino-2-methyl-5-(diphosphooxymethyl)pyrimidine + 2 H(+) = thiamine phosphate + CO2 + diphosphate. The catalysed reaction is 2-(2-carboxy-4-methylthiazol-5-yl)ethyl phosphate + 4-amino-2-methyl-5-(diphosphooxymethyl)pyrimidine + 2 H(+) = thiamine phosphate + CO2 + diphosphate. It carries out the reaction 4-methyl-5-(2-phosphooxyethyl)-thiazole + 4-amino-2-methyl-5-(diphosphooxymethyl)pyrimidine + H(+) = thiamine phosphate + diphosphate. It functions in the pathway cofactor biosynthesis; thiamine diphosphate biosynthesis; thiamine phosphate from 4-amino-2-methyl-5-diphosphomethylpyrimidine and 4-methyl-5-(2-phosphoethyl)-thiazole: step 1/1. In terms of biological role, condenses 4-methyl-5-(beta-hydroxyethyl)thiazole monophosphate (THZ-P) and 2-methyl-4-amino-5-hydroxymethyl pyrimidine pyrophosphate (HMP-PP) to form thiamine monophosphate (TMP). This Salmonella agona (strain SL483) protein is Thiamine-phosphate synthase.